Here is a 457-residue protein sequence, read N- to C-terminus: Dihydrolipoyl dehydrogenase (457 aa).

FAD contacts are provided by residues glutamate 32–cysteine 40, lysine 49, and alanine 113. The cysteines at positions 40 and 45 are disulfide-linked. NAD(+)-binding positions include glycine 178–isoleucine 182, valine 235, and serine 262–arginine 265. FAD is bound by residues aspartate 303 and alanine 311. The active-site Proton acceptor is the histidine 437.

This sequence belongs to the class-I pyridine nucleotide-disulfide oxidoreductase family. Homodimer. The cofactor is FAD.

The protein localises to the cytoplasm. The catalysed reaction is N(6)-[(R)-dihydrolipoyl]-L-lysyl-[protein] + NAD(+) = N(6)-[(R)-lipoyl]-L-lysyl-[protein] + NADH + H(+). Its function is as follows. Lipoamide dehydrogenase is a component of the alpha-ketoacid dehydrogenase complexes. The sequence is that of Dihydrolipoyl dehydrogenase (pdhD) from Mycoplasma genitalium (strain ATCC 33530 / DSM 19775 / NCTC 10195 / G37) (Mycoplasmoides genitalium).